Consider the following 492-residue polypeptide: Solute carrier family 2, facilitated glucose transporter member 1 (492 aa).

At Met-1 the chain carries N-acetylmethionine. The Cytoplasmic portion of the chain corresponds to Met-1–Arg-11. Residues Leu-12–Ile-33 form a helical membrane-spanning segment. The Extracellular segment spans residues Asn-34–Ser-66. Asn-45 is a glycosylation site (N-linked (GlcNAc...) asparagine). The chain crosses the membrane as a helical span at residues Leu-67 to Val-87. At Asn-88 to Phe-90 the chain is on the cytoplasmic side. A helical membrane pass occupies residues Gly-91 to Phe-112. The Extracellular portion of the chain corresponds to Ser-113–Glu-120. A helical membrane pass occupies residues Met-121–Val-144. Residues Gly-145 to Ala-155 lie on the Cytoplasmic side of the membrane. A helical transmembrane segment spans residues Leu-156–Leu-176. Gln-161 provides a ligand contact to D-glucose. Residues Asp-177–Leu-185 lie on the Extracellular side of the membrane. Residues Trp-186–Phe-206 form a helical membrane-spanning segment. Residues Cys-207–Pro-271 lie on the Cytoplasmic side of the membrane. The residue at position 226 (Ser-226) is a Phosphoserine. A helical transmembrane segment spans residues Ile-272–Tyr-293. Residues Gln-282–Gln-283 and Asn-288 each bind D-glucose. The Extracellular portion of the chain corresponds to Ser-294–Pro-306. The helical transmembrane segment at Val-307–Val-328 threads the bilayer. Asn-317 provides a ligand contact to D-glucose. Residues Glu-329–Arg-334 lie on the Cytoplasmic side of the membrane. The helical transmembrane segment at Thr-335–Leu-355 threads the bilayer. Topologically, residues Ala-356 to Ser-365 are extracellular. Residues Tyr-366 to Trp-388 traverse the membrane as a helical segment. The D-glucose site is built by Glu-380 and Trp-388. Over Phe-389–Pro-401 the chain is Cytoplasmic. A helical membrane pass occupies residues Ala-402–Phe-422. Topologically, residues Gln-423 to Cys-429 are extracellular. The chain crosses the membrane as a helical span at residues Gly-430–Phe-450. At Ser-465 the chain carries Phosphoserine. A disordered region spans residues Arg-468–Val-492. Thr-478 is subject to Phosphothreonine. Ser-490 carries the post-translational modification Phosphoserine.

Belongs to the major facilitator superfamily. Sugar transporter (TC 2.A.1.1) family. Glucose transporter subfamily. In terms of assembly, found in a complex with ADD2, DMTN and SLC2A1. Interacts (via C-terminus cytoplasmic region) with DMTN. Interacts with SNX27; the interaction is required when endocytosed to prevent degradation in lysosomes and promote recycling to the plasma membrane. Interacts with GIPC (via PDZ domain). Interacts with STOM. Interacts with SGTA (via Gln-rich region). Interacts with BSG. Interacts with SMIM43; the interaction may promote SLC2A1-mediated glucose transport to meet the energy needs of mesendoderm differentiation. Phosphorylation at Ser-226 by PKC promotes glucose uptake by increasing cell membrane localization.

The protein localises to the cell membrane. Its subcellular location is the photoreceptor inner segment. It carries out the reaction D-glucose(out) = D-glucose(in). Its activity is regulated as follows. The uptake of glucose is inhibited by cytochalasin B. Glucose uptake is increased in response to phorbol ester 12-O-tetradecanoylphorbol-13-acetate (TPA) treatment: TPA-induced glucose uptake requires phosphorylation at Ser-226. Functionally, facilitative glucose transporter, which is responsible for constitutive or basal glucose uptake. Has a very broad substrate specificity; can transport a wide range of aldoses including both pentoses and hexoses. Most important energy carrier of the brain: present at the blood-brain barrier and assures the energy-independent, facilitative transport of glucose into the brain. In association with BSG and NXNL1, promotes retinal cone survival by increasing glucose uptake into photoreceptors. Required for mesendoderm differentiation. The sequence is that of Solute carrier family 2, facilitated glucose transporter member 1 from Sus scrofa (Pig).